A 228-amino-acid chain; its full sequence is Ribosomal RNA small subunit methyltransferase G (228 aa).

Residues Gly89, Leu94, 140–141, and Arg159 contribute to the S-adenosyl-L-methionine site; that span reads VE.

It belongs to the methyltransferase superfamily. RNA methyltransferase RsmG family.

Its subcellular location is the cytoplasm. The enzyme catalyses guanosine(527) in 16S rRNA + S-adenosyl-L-methionine = N(7)-methylguanosine(527) in 16S rRNA + S-adenosyl-L-homocysteine. Functionally, specifically methylates the N7 position of guanine in position 527 of 16S rRNA. In Burkholderia multivorans (strain ATCC 17616 / 249), this protein is Ribosomal RNA small subunit methyltransferase G.